Reading from the N-terminus, the 142-residue chain is Mitochondrial import inner membrane translocase subunit TIM22-4 (142 aa).

The next 4 helical transmembrane spans lie at 21-41, 70-88, 97-113, and 120-137; these read VTSGVMGGGLGLMMGLFLGAL, SCKTFAVMGLVFSAAECIV, TVNTAIAGCVTGGSMSA, and ACIGCAGFAIFSVLIEKF.

It belongs to the Tim17/Tim22/Tim23 family.

Its subcellular location is the mitochondrion inner membrane. In terms of biological role, essential core component of the TIM22 complex, a complex that mediates the import and insertion of multi-pass transmembrane proteins into the mitochondrial inner membrane. The chain is Mitochondrial import inner membrane translocase subunit TIM22-4 (TIM22-4) from Arabidopsis thaliana (Mouse-ear cress).